The primary structure comprises 203 residues: UPF0637 protein SSP1683 (203 aa).

The protein belongs to the UPF0637 family.

This Staphylococcus saprophyticus subsp. saprophyticus (strain ATCC 15305 / DSM 20229 / NCIMB 8711 / NCTC 7292 / S-41) protein is UPF0637 protein SSP1683.